The chain runs to 125 residues: Apolipoprotein C-IV (125 aa).

Positions 1–27 are cleaved as a signal peptide; sequence MSLLRQRLQALPVLCLCVLVLACIGAC.

This sequence belongs to the apolipoprotein C4 family.

It is found in the secreted. In terms of biological role, may participate in lipoprotein metabolism. This chain is Apolipoprotein C-IV (APOC4), found in Plecturocebus moloch (Dusky titi monkey).